Reading from the N-terminus, the 215-residue chain is Adenylate kinase (215 aa).

An ATP-binding site is contributed by 10 to 15; that stretch reads GAGKGT. The interval 30-59 is NMP; sequence STGDMFRAAMKNNTELGKKAKSFMDNGDLV. Residues T31, R36, 57–59, 85–88, and Q92 contribute to the AMP site; these read DLV and GFPR. The tract at residues 126–163 is LID; sequence GRWICRTCGKTYHEIYNPPKVPGKCDLDGGELYQREDD. R127 is a binding site for ATP. Zn(2+)-binding residues include C130 and C133. 136-137 is a binding site for ATP; the sequence is TY. Residues C150 and D153 each contribute to the Zn(2+) site. Positions 160 and 171 each coordinate AMP. ATP is bound at residue Q199.

Belongs to the adenylate kinase family. Monomer.

The protein resides in the cytoplasm. The catalysed reaction is AMP + ATP = 2 ADP. It participates in purine metabolism; AMP biosynthesis via salvage pathway; AMP from ADP: step 1/1. In terms of biological role, catalyzes the reversible transfer of the terminal phosphate group between ATP and AMP. Plays an important role in cellular energy homeostasis and in adenine nucleotide metabolism. The sequence is that of Adenylate kinase from Listeria innocua serovar 6a (strain ATCC BAA-680 / CLIP 11262).